Reading from the N-terminus, the 31-residue chain is Photosystem II reaction center protein T (31 aa).

A helical transmembrane segment spans residues 3 to 23 (SVAYIVVLTMALAVLFFAIAF).

Belongs to the PsbT family. PSII is composed of 1 copy each of membrane proteins PsbA, PsbB, PsbC, PsbD, PsbE, PsbF, PsbH, PsbI, PsbJ, PsbK, PsbL, PsbM, PsbT, PsbX, PsbY, PsbZ, Psb30/Ycf12, peripheral proteins PsbO, CyanoQ (PsbQ), PsbU, PsbV and a large number of cofactors. It forms dimeric complexes.

It localises to the cellular thylakoid membrane. Its function is as follows. Found at the monomer-monomer interface of the photosystem II (PS II) dimer, plays a role in assembly and dimerization of PSII. PSII is a light-driven water plastoquinone oxidoreductase, using light energy to abstract electrons from H(2)O, generating a proton gradient subsequently used for ATP formation. The protein is Photosystem II reaction center protein T of Crocosphaera subtropica (strain ATCC 51142 / BH68) (Cyanothece sp. (strain ATCC 51142)).